The sequence spans 215 residues: Adenylate kinase (215 aa).

10–15 is a binding site for ATP; sequence GAGKGT. The interval 30 to 59 is NMP; that stretch reads STGDILRENVKNETELGKKAKEYMDKGLLV. Residues Thr-31, Arg-36, 57-59, 85-88, and Gln-92 contribute to the AMP site; these read LLV and GFPR. Residues 126 to 163 are LID; the sequence is GRRICKNCGASFHVIYRPPQKEGVCDVCGGELYQREDD. ATP is bound at residue Arg-127. Residues Cys-130 and Cys-133 each coordinate Zn(2+). 136-137 contributes to the ATP binding site; that stretch reads SF. Zn(2+) contacts are provided by Cys-150 and Cys-153. 2 residues coordinate AMP: Arg-160 and Arg-171. Gln-198 is a binding site for ATP.

It belongs to the adenylate kinase family. In terms of assembly, monomer.

It is found in the cytoplasm. The catalysed reaction is AMP + ATP = 2 ADP. The protein operates within purine metabolism; AMP biosynthesis via salvage pathway; AMP from ADP: step 1/1. Its function is as follows. Catalyzes the reversible transfer of the terminal phosphate group between ATP and AMP. Plays an important role in cellular energy homeostasis and in adenine nucleotide metabolism. The protein is Adenylate kinase of Caldicellulosiruptor bescii (strain ATCC BAA-1888 / DSM 6725 / KCTC 15123 / Z-1320) (Anaerocellum thermophilum).